The chain runs to 483 residues: Xylulose kinase (483 aa).

77-78 (MH) contacts substrate. The active-site Proton acceptor is the aspartate 233.

This sequence belongs to the FGGY kinase family.

It carries out the reaction D-xylulose + ATP = D-xylulose 5-phosphate + ADP + H(+). Its function is as follows. Catalyzes the phosphorylation of D-xylulose to D-xylulose 5-phosphate. The polypeptide is Xylulose kinase (Klebsiella pneumoniae).